We begin with the raw amino-acid sequence, 392 residues long: Phospho-N-acetylmuramoyl-pentapeptide-transferase (392 aa).

11 helical membrane passes run 24-44 (YLTLRAVMAALTALLIGLIAG), 76-96 (TMGGVLILGSIAISTLLWFDL), 100-120 (FVWIVLAVTLGFGAIGWVDDW), 137-157 (YFWQSVIGLLAALYLVFSISE), 167-187 (FITWVQSGFLMDLPPKAGLLV), 193-213 (VSYPLGVLGFVILTYLVIVGS), 225-245 (GLAIMPVIMVGASLGIFAYVT), 262-282 (SGELLIFCAAMAGAGLAFLWF), 289-309 (VFMGDVGALALGAALGTIAVI), 314-334 (IVLAIMGGIFVVEALSVMLQV), and 369-389 (QVVVRFWIITMLLCLVGLTTL).

It belongs to the glycosyltransferase 4 family. MraY subfamily. The cofactor is Mg(2+).

Its subcellular location is the cell inner membrane. It catalyses the reaction UDP-N-acetyl-alpha-D-muramoyl-L-alanyl-gamma-D-glutamyl-meso-2,6-diaminopimeloyl-D-alanyl-D-alanine + di-trans,octa-cis-undecaprenyl phosphate = di-trans,octa-cis-undecaprenyl diphospho-N-acetyl-alpha-D-muramoyl-L-alanyl-D-glutamyl-meso-2,6-diaminopimeloyl-D-alanyl-D-alanine + UMP. It participates in cell wall biogenesis; peptidoglycan biosynthesis. In terms of biological role, catalyzes the initial step of the lipid cycle reactions in the biosynthesis of the cell wall peptidoglycan: transfers peptidoglycan precursor phospho-MurNAc-pentapeptide from UDP-MurNAc-pentapeptide onto the lipid carrier undecaprenyl phosphate, yielding undecaprenyl-pyrophosphoryl-MurNAc-pentapeptide, known as lipid I. This chain is Phospho-N-acetylmuramoyl-pentapeptide-transferase, found in Acidovorax ebreus (strain TPSY) (Diaphorobacter sp. (strain TPSY)).